A 147-amino-acid polypeptide reads, in one-letter code: uncharacterized protein (147 aa).

The 89-residue stretch at 50 to 138 (IVVAGNIKVK…LLAKPAEIKI (89 aa)) folds into the ABM domain.

It belongs to the LsrG family.

This is an uncharacterized protein from Synechocystis sp. (strain ATCC 27184 / PCC 6803 / Kazusa).